The following is a 614-amino-acid chain: Probable Xaa-Pro aminopeptidase P (614 aa).

The Mn(2+) site is built by Asp-409, Asp-420, Glu-518, and Glu-532.

Belongs to the peptidase M24B family. Requires Mn(2+) as cofactor.

The catalysed reaction is Release of any N-terminal amino acid, including proline, that is linked to proline, even from a dipeptide or tripeptide.. Its function is as follows. Catalyzes the removal of a penultimate prolyl residue from the N-termini of peptides. This chain is Probable Xaa-Pro aminopeptidase P (ampp), found in Aspergillus niger (strain ATCC MYA-4892 / CBS 513.88 / FGSC A1513).